We begin with the raw amino-acid sequence, 342 residues long: uncharacterized protein (342 aa).

The protein belongs to the cycloisomerase 2 family.

This is an uncharacterized protein from Staphylococcus epidermidis (strain ATCC 12228 / FDA PCI 1200).